We begin with the raw amino-acid sequence, 81 residues long: ATP synthase subunit c, chloroplastic (81 aa).

2 helical membrane passes run 7–27 and 57–77; these read AASVIAAGLAVGLASIGPGIG and LAFMEALTIYGLVVALALLFA.

It belongs to the ATPase C chain family. In terms of assembly, F-type ATPases have 2 components, F(1) - the catalytic core - and F(0) - the membrane proton channel. F(1) has five subunits: alpha(3), beta(3), gamma(1), delta(1), epsilon(1). F(0) has four main subunits: a(1), b(1), b'(1) and c(10-14). The alpha and beta chains form an alternating ring which encloses part of the gamma chain. F(1) is attached to F(0) by a central stalk formed by the gamma and epsilon chains, while a peripheral stalk is formed by the delta, b and b' chains.

Its subcellular location is the plastid. The protein resides in the chloroplast thylakoid membrane. Its function is as follows. F(1)F(0) ATP synthase produces ATP from ADP in the presence of a proton or sodium gradient. F-type ATPases consist of two structural domains, F(1) containing the extramembraneous catalytic core and F(0) containing the membrane proton channel, linked together by a central stalk and a peripheral stalk. During catalysis, ATP synthesis in the catalytic domain of F(1) is coupled via a rotary mechanism of the central stalk subunits to proton translocation. Key component of the F(0) channel; it plays a direct role in translocation across the membrane. A homomeric c-ring of between 10-14 subunits forms the central stalk rotor element with the F(1) delta and epsilon subunits. The chain is ATP synthase subunit c, chloroplastic from Staurastrum punctulatum (Green alga).